Consider the following 324-residue polypeptide: Phosphatidylinositol N-acetylglucosaminyltransferase GPI2 subunit (324 aa).

Residues Met1–Ser79 lie on the Cytoplasmic side of the membrane. The helical transmembrane segment at Leu80 to Tyr100 threads the bilayer. Topologically, residues Arg101 to Ala107 are lumenal. Residues Leu108–Leu128 form a helical membrane-spanning segment. The Cytoplasmic segment spans residues Arg129 to Tyr140. Residues Met141–Leu161 form a helical membrane-spanning segment. At Met162–Asp171 the chain is on the lumenal side. The chain crosses the membrane as a helical span at residues Ser172 to Thr192. At Glu193–Lys223 the chain is on the cytoplasmic side. A helical transmembrane segment spans residues Ser224 to Phe244. Residues Arg245 to Val250 are Lumenal-facing. The helical transmembrane segment at Phe251 to Leu271 threads the bilayer. Topologically, residues Asn272 to Ser276 are cytoplasmic. The helical transmembrane segment at Val277 to Ile299 threads the bilayer. Residues Lys300–Gly324 lie on the Lumenal side of the membrane.

This sequence belongs to the PIGC family.

Its subcellular location is the endoplasmic reticulum membrane. The catalysed reaction is a 1,2-diacyl-sn-glycero-3-phospho-(1D-myo-inositol) + UDP-N-acetyl-alpha-D-glucosamine = a 6-(N-acetyl-alpha-D-glucosaminyl)-1-(1,2-diacyl-sn-glycero-3-phospho)-1D-myo-inositol + UDP + H(+). Its pathway is glycolipid biosynthesis; glycosylphosphatidylinositol-anchor biosynthesis. Part of the complex catalyzing the transfer of N-acetylglucosamine from UDP-N-acetylglucosamine to phosphatidylinositol, the first step of GPI biosynthesis. This Schizosaccharomyces pombe (strain 972 / ATCC 24843) (Fission yeast) protein is Phosphatidylinositol N-acetylglucosaminyltransferase GPI2 subunit (gpi2).